A 1464-amino-acid chain; its full sequence is Collagen alpha-1(I) chain (1464 aa).

The signal sequence occupies residues 1–22; it reads MFSFVDLRLLLLLAATALLTHG. Residues 23-161 constitute a propeptide, N-terminal propeptide; that stretch reads QEEGQVEGQD…PPGLGGNFAP (139 aa). The VWFC domain maps to 38–96; that stretch reads ITCVQNGLRYHDRDVWKPEPCRICVCDNGKVLCDDVICDETKNCPGAEVPEGECCPVCP. The tract at residues 98 to 1214 is disordered; that stretch reads GSESPTDQET…PQEKAHDGGR (1117 aa). Pro residues predominate over residues 138 to 153; sequence PGLPGPPGPPGPPGPP. The residue at position 162 (Q162) is a Pyrrolidone carboxylic acid. The interval 162-178 is nonhelical region (N-terminal); the sequence is QLSYGYDEKSTGGISVP. K170 carries the allysine modification. The residue at position 171 (S171) is a Phosphoserine. Positions 179 to 1192 are triple-helical region; the sequence is GPMGPSGPRG…PGPPGPPGPP (1014 aa). Residues P190, P193, P196, P205, P208, P211, P226, P241, P247, P256, and P262 each carry the 4-hydroxyproline modification. Over residues 198 to 217 the composition is skewed to low complexity; that stretch reads PQGFQGPPGEPGEPGASGPM. Residues 229–243 are compositionally biased toward basic and acidic residues; the sequence is NGDDGEAGKPGRPGE. K265 carries the post-translational modification 5-hydroxylysine; alternate. The O-linked (Gal...) hydroxylysine; alternate glycan is linked to K265. S271 carries the post-translational modification Phosphoserine. Residues 279 to 295 show a composition bias toward low complexity; that stretch reads DAGPAGPKGEPGSPGEN. Residues P289, P292, P298, P307, and P313 each carry the 4-hydroxyproline modification. The span at 318–331 shows a compositional bias: low complexity; it reads PAGARGNDGATGAA. A compositionally biased stretch (pro residues) spans 333-345; sequence PPGPTGPAGPPGF. Residues P334, P343, P346, P373, P376, P388, P394, P403, P409, P412, and P427 each carry the 4-hydroxyproline modification. A compositionally biased stretch (low complexity) spans 379 to 418; it reads AGAAGPAGNPGADGQPGAKGANGAPGIAGAPGFPGARGPS. At K430 the chain carries 5-hydroxylysine. A 4-hydroxyproline mark is found at P436, P439, P451, P460, P475, P481, P490, and P496. The span at 448 to 457 shows a compositional bias: low complexity; the sequence is KGEPGPVGVQ. Positions 485 to 494 are enriched in gly residues; that stretch reads GERGGPGSRG. Position 505 is a 5-hydroxylysine (K505). P514, P523, P529, P535, P544, P547, P556, P565, P571, P583, P592, P601, P604, P622, P640, P646, P652, P658, P664, P670, P682, P691, P703, P715, P718, P724, P730, and P739 each carry 4-hydroxyproline. The span at 538–564 shows a compositional bias: low complexity; it reads KGLTGSPGSPGPDGKTGPPGPAGQDGR. The segment covering 573–592 has biased composition (low complexity); that stretch reads ARGQAGVMGFPGPKGAAGEP. Residues 634-661 are compositionally biased toward low complexity; the sequence is QGPAGSPGFQGLPGPAGPPGEAGKPGEQ. Residues 696-724 are compositionally biased toward low complexity; the sequence is PRGANGAPGNDGAKGDAGAPGAPGSQGAP. The short motif at 745 to 747 is the Cell attachment site element; it reads RGD. 5-hydroxylysine is present on K751. 4-hydroxyproline is present on residues P757, P772, and P778. The segment covering 784 to 798 has biased composition (low complexity); that stretch reads SGPSGPAGPTGARGA. S787 carries the phosphoserine modification. Residues P799, P805, P808, P817, P823, P841, P850, and P859 each carry the 4-hydroxyproline modification. Low complexity predominate over residues 811-838; it reads AGFAGPPGADGQPGAKGEPGDAGAKGDA. The span at 840-852 shows a compositional bias: pro residues; that stretch reads PPGPAGPAGPPGP. The segment covering 853–883 has biased composition (low complexity); that stretch reads IGNVGAPGAKGARGSAGPPGATGFPGAAGRV. At K862 the chain carries 5-hydroxylysine. 4-hydroxyproline occurs at positions 871 and 877. 3-hydroxyproline is present on P885. 4-hydroxyproline is present on residues P886, P895, P898, P919, P928, P937, P946, P964, P973, P976, P982, P997, P1003, P1009, P1018, and P1024. The span at 912 to 921 shows a compositional bias: low complexity; it reads ETGPAGRPGE. Positions 931–955 are enriched in low complexity; the sequence is AGEKGSPGADGPAGAPGTPGPQGIA. Residues 996–1006 are compositionally biased toward pro residues; sequence PPGPMGPPGLA. At K1033 the chain carries 5-hydroxylysine. Pro residues predominate over residues 1042–1057; that stretch reads AGPPGAPGAPGAPGPV. 4-hydroxyproline is present on residues P1045, P1048, and P1051. The segment covering 1078–1092 has biased composition (low complexity); it reads VGPVGARGPAGPQGP. Positions 1093-1095 match the Cell attachment site motif; that stretch reads RGD. A compositionally biased stretch (basic and acidic residues) spans 1093–1107; it reads RGDKGETGEQGDRGI. K1096 carries the 5-hydroxylysine modification. 5-hydroxylysine; alternate is present on K1108. Residue K1108 is glycosylated (O-linked (Gal...) hydroxylysine; alternate). 4-hydroxyproline is present on residues P1120, P1123, P1126, P1144, and P1159. Low complexity predominate over residues 1126–1159; the sequence is PGEQGPSGASGPAGPRGPPGSAGAPGKDGLNGLP. The residue at position 1164 (P1164) is a 3-hydroxyproline. P1165 carries the post-translational modification 4-hydroxyproline. A compositionally biased stretch (pro residues) spans 1177–1192; that stretch reads VGPPGPPGPPGPPGPP. P1179 carries the 3-hydroxyproline modification. P1180 bears the 4-hydroxyproline mark. P1182 is modified (3-hydroxyproline). P1183 carries the post-translational modification 4-hydroxyproline. P1185 carries the post-translational modification 3-hydroxyproline. Residues P1186, P1189, and P1192 each carry the 4-hydroxyproline modification. Positions 1193–1218 are nonhelical region (C-terminal); it reads SAGFDFSFLPQPPQEKAHDGGRYYRA. Residue K1208 is modified to Allysine. A propeptide spans 1219–1464 (C-terminal propeptide); it reads DDANVVRDRD…GFDVGPVCFL (246 aa). The Fibrillar collagen NC1 domain occupies 1229-1464; it reads LEVDTTLKSL…GFDVGPVCFL (236 aa). 3 cysteine pairs are disulfide-bonded: C1259-C1291, C1299-C1462, and C1370-C1415. The Ca(2+) site is built by D1277, N1279, Q1280, C1282, and D1285. Residue N1365 is glycosylated (N-linked (GlcNAc...) asparagine).

It belongs to the fibrillar collagen family. In terms of assembly, trimers of one alpha 2(I) and two alpha 1(I) chains. Interacts with MRC2. Interacts with TRAM2. Interacts with MFAP4 in a Ca (2+)-dependent manner. Post-translationally, contains mostly 4-hydroxyproline. Proline residues at the third position of the tripeptide repeating unit (G-X-Y) are hydroxylated in some or all of the chains. Contains 3-hydroxyproline at a few sites. This modification occurs on the first proline residue in the sequence motif Gly-Pro-Hyp, where Hyp is 4-hydroxyproline. In terms of processing, lysine residues at the third position of the tripeptide repeating unit (G-X-Y) are 5-hydroxylated in some or all of the chains. Post-translationally, O-glycosylated on hydroxylated lysine residues. The O-linked glycan consists of a Glc-Gal disaccharide. As to expression, forms the fibrils of tendon, ligaments and bones. In bones the fibrils are mineralized with calcium hydroxyapatite.

It localises to the secreted. Its subcellular location is the extracellular space. The protein localises to the extracellular matrix. Functionally, type I collagen is a member of group I collagen (fibrillar forming collagen). The protein is Collagen alpha-1(I) chain (COL1A1) of Homo sapiens (Human).